Here is a 141-residue protein sequence, read N- to C-terminus: Hemoglobin subunit alpha (141 aa).

The 141-residue stretch at Val-1–Arg-141 folds into the Globin domain. Residue Ser-3 is modified to Phosphoserine. Residues Lys-7 and Lys-11 each carry the N6-succinyllysine modification. N6-acetyllysine; alternate is present on Lys-16. The residue at position 16 (Lys-16) is an N6-succinyllysine; alternate. Phosphotyrosine is present on Tyr-24. The residue at position 35 (Ser-35) is a Phosphoserine. At Lys-40 the chain carries N6-succinyllysine. Ser-49 is subject to Phosphoserine. His-58 contributes to the O2 binding site. His-87 is a heme b binding site. A Phosphoserine modification is found at Ser-102. Thr-108 is modified (phosphothreonine). Position 124 is a phosphoserine (Ser-124). Thr-134 and Thr-137 each carry phosphothreonine. Ser-138 is modified (phosphoserine).

It belongs to the globin family. In terms of assembly, heterotetramer of two alpha chains and two beta chains. In terms of tissue distribution, red blood cells.

Involved in oxygen transport from the lung to the various peripheral tissues. Its function is as follows. Hemopressin acts as an antagonist peptide of the cannabinoid receptor CNR1. Hemopressin-binding efficiently blocks cannabinoid receptor CNR1 and subsequent signaling. This chain is Hemoglobin subunit alpha (HBA), found in Talpa europaea (European mole).